The sequence spans 214 residues: Phosphoenolpyruvate guanylyltransferase 2 (214 aa).

Positions 135, 150, and 153 each coordinate phosphoenolpyruvate.

It belongs to the CofC family.

It catalyses the reaction phosphoenolpyruvate + GTP + H(+) = enolpyruvoyl-2-diphospho-5'-guanosine + diphosphate. Its pathway is cofactor biosynthesis; coenzyme F420 biosynthesis. Guanylyltransferase that catalyzes the activation of phosphoenolpyruvate (PEP) as enolpyruvoyl-2-diphospho-5'-guanosine, via the condensation of PEP with GTP. It is involved in the biosynthesis of coenzyme F420, a hydride carrier cofactor. This Rhodococcus jostii (strain RHA1) protein is Phosphoenolpyruvate guanylyltransferase 2.